Here is a 468-residue protein sequence, read N- to C-terminus: Flavin-containing monooxygenase FMO GS-OX-like 1 (468 aa).

16-21 (GLGAAG) serves as a coordination point for FAD. 211–216 (GSQASG) contacts NADP(+).

It belongs to the FMO family. FAD serves as cofactor.

Its function is as follows. Catalyzes the conversion of methylthioalkyl glucosinolates of any chain length into methylsulfinylalkyl glucosinolates. This Arabidopsis thaliana (Mouse-ear cress) protein is Flavin-containing monooxygenase FMO GS-OX-like 1.